A 218-amino-acid polypeptide reads, in one-letter code: Glutathione S-transferase U22 (218 aa).

At A2 the chain carries N-acetylalanine. The region spanning 3–82 is the GST N-terminal domain; it reads DEVILLDFWP…YIDEVWSDKN (80 aa). Glutathione-binding positions include 13 to 14, 39 to 40, 53 to 54, and 66 to 67; these read SP, DK, KI, and ES. Residues 88-208 enclose the GST C-terminal domain; sequence DPYQRAQARF…LHDSEKILAF (121 aa). A Phosphothreonine modification is found at T149.

This sequence belongs to the GST superfamily. Tau family.

Its subcellular location is the cytoplasm. It localises to the cytosol. The catalysed reaction is RX + glutathione = an S-substituted glutathione + a halide anion + H(+). Functionally, may be involved in the conjugation of reduced glutathione to a wide number of exogenous and endogenous hydrophobic electrophiles and have a detoxification role against certain herbicides. The protein is Glutathione S-transferase U22 (GSTU22) of Arabidopsis thaliana (Mouse-ear cress).